The chain runs to 1274 residues: Myosin-binding protein C, cardiac-type (1274 aa).

An N-acetylmethionine modification is found at methionine 1. Phosphoserine is present on serine 47. Residues 107 to 141 show a composition bias toward low complexity; that stretch reads APAPAEATGAPGEAPAPAAELGESAPSPKGSSSAA. The segment at 107-153 is disordered; it reads APAPAEATGAPGEAPAPAAELGESAPSPKGSSSAALNGPTPGAPDDP. The 104-residue stretch at 153–256 folds into the Ig-like C2-type 1 domain; it reads PIGLFVMRPQ…FDCSNFNLTV (104 aa). 4 residues coordinate Zn(2+): glutamine 208, histidine 210, glutamate 223, and histidine 225. Phosphoserine; by PKA and PKC is present on residues serine 275, serine 284, and serine 304. A phosphoserine mark is found at serine 311 and serine 427. 4 Ig-like C2-type domains span residues 362-452, 453-543, 544-633, and 645-771; these read STAF…VKEP, PVLI…VQEK, KLEV…HFME, and PKIH…VIDV. Cysteine 436 and cysteine 443 are oxidised to a cystine. Serine 550 bears the Phosphoserine mark. Threonine 607 carries the phosphothreonine modification. Fibronectin type-III domains lie at 774 to 870 and 872 to 967; these read APAA…IGPP and EPTH…VQEI. The Ig-like C2-type 6 domain occupies 971–1065; the sequence is PRLQLPRHLR…ATLVLQVVDK (95 aa). Residues 1068-1163 form the Fibronectin type-III 3 domain; sequence PPQDLRVTDA…TKEPVFIPRP (96 aa). Residues 1181-1274 form the Ig-like C2-type 7 domain; the sequence is PSFTQPLVNR…ECRLEVRVPQ (94 aa). At arginine 1241 the chain carries Omega-N-methylarginine.

This sequence belongs to the immunoglobulin superfamily. MyBP family. Post-translationally, substrate for phosphorylation by PKA and PKC. Reversible phosphorylation appears to modulate contraction. Polyubiquitinated.

In terms of biological role, thick filament-associated protein located in the crossbridge region of vertebrate striated muscle a bands. In vitro it binds MHC, F-actin and native thin filaments, and modifies the activity of actin-activated myosin ATPase. It may modulate muscle contraction or may play a more structural role. The chain is Myosin-binding protein C, cardiac-type (MYBPC3) from Homo sapiens (Human).